The sequence spans 430 residues: tRNA(Ile)-lysidine synthase (430 aa).

24–29 (SGGLDS) contributes to the ATP binding site.

The protein belongs to the tRNA(Ile)-lysidine synthase family.

Its subcellular location is the cytoplasm. The enzyme catalyses cytidine(34) in tRNA(Ile2) + L-lysine + ATP = lysidine(34) in tRNA(Ile2) + AMP + diphosphate + H(+). In terms of biological role, ligates lysine onto the cytidine present at position 34 of the AUA codon-specific tRNA(Ile) that contains the anticodon CAU, in an ATP-dependent manner. Cytidine is converted to lysidine, thus changing the amino acid specificity of the tRNA from methionine to isoleucine. The polypeptide is tRNA(Ile)-lysidine synthase (Haemophilus influenzae (strain 86-028NP)).